The primary structure comprises 328 residues: Arylacetonitrilase (328 aa).

The CN hydrolase domain maps to 5-278 (VRVAVTQAEP…EGIIYADLDL (274 aa)). E45 serves as the catalytic Proton acceptor. The active site involves K125. Catalysis depends on C160, which acts as the Nucleophile.

It belongs to the carbon-nitrogen hydrolase superfamily. Nitrilase family.

The catalysed reaction is a nitrile + 2 H2O = a carboxylate + NH4(+). The enzyme catalyses 4-chlorophenylacetonitrile + 2 H2O = 4-chlorophenylacetate + NH4(+). In terms of biological role, nitrilase that hydrolyzes preferentially phenylacetonitrile and (R,S)-mandelonitrile. Also acts on dinitriles like phenylenediacetonitriles (PDAs) 1,2-PDA, 1,3-PDA, and 1,4-PDA, and cyanophenyl acetonitriles (CPAs) 2-CPA and 4-CPA. In Aspergillus kawachii (strain NBRC 4308) (White koji mold), this protein is Arylacetonitrilase (nit2).